The following is a 702-amino-acid chain: MSNESTNDAPPDDDPDDPEPSVDHDDTDGLQDDPADSVDDAGEVDDLENLGSDVGVEGDVSIDEDNAEDDLLGGLRIDDTSDITVPDRLVDQVIGQEAAREIVKRAAKQHRHVMMIGSPGTGKSLLAKAMSRLLPKESLQDVLVYHNPDDSNEPKVRTVPAGKGEQIVDAHKEEARKRNQMRSFLMWIMILLAVGYALLIATPARPLLALLSAAGIYLLFRYTNRGSDAMVPKLLINNADRQVAPFEDATGAHAGAMLGDVRHDPFQSGGMATPSHERVEAGSIQKANKGVLFIDEINTLDVRSQQKLMTAIQEGEFSITGQSERSSGAMVQTEAVPCDFIMVAAGNMDAMENMHPALRSRIKGYGYEVYMDDTIEDTPDMRRKYARFVAQEVEKDGNLPHFAPDAIRELILEAKRRAGRKDSLTLKLRDLGGLVRVAGDIARSEGHDLTQRSDVLEAKKRSRSIEQQFVDNYIQRRKDYELGTTSEEAVGRVNGLAVMGGDSGIMLPVMAEITPAQSQEEGRIYATGQLKEMAEEAVENVSAIIKKFSDENMSEKDTHIQFVQAGEGGVDGDSASITVATAVISALEDIPVAQELAMTGSLSVRGDVLPVGGVTHKIEAAAKAGCERVIIPKANEDDVMIEDEYEEQIEIIPVTHISEVLDVALVGEPEKDSLVDRLKSITGKALDSASDSGTTGGNPSPQ.

The segment at 1–63 (MSNESTNDAP…VGVEGDVSID (63 aa)) is disordered. Over 1-183 (MSNESTNDAP…EARKRNQMRS (183 aa)) the chain is Cytoplasmic. Residues 10–48 (PPDDDPDDPEPSVDHDDTDGLQDDPADSVDDAGEVDDLE) are compositionally biased toward acidic residues. Residue 117-124 (GSPGTGKS) participates in ATP binding. The helical transmembrane segment at 184-201 (FLMWIMILLAVGYALLIA) threads the bilayer. At 202–206 (TPARP) the chain is on the extracellular side. A helical transmembrane segment spans residues 207 to 223 (LLALLSAAGIYLLFRYT). Residues 224–702 (NRGSDAMVPK…GTTGGNPSPQ (479 aa)) lie on the Cytoplasmic side of the membrane. Residues 487–667 (EEAVGRVNGL…SEVLDVALVG (181 aa)) enclose the Lon proteolytic domain. Active-site residues include Ser-574 and Lys-617.

This sequence belongs to the peptidase S16 family. Archaeal LonB subfamily. Homohexamer. Organized in a ring with a central cavity.

The protein localises to the cell membrane. Its function is as follows. ATP-dependent serine protease that mediates the selective degradation of mutant and abnormal proteins as well as certain short-lived regulatory proteins. Degrades polypeptides processively. The chain is Archaeal Lon protease from Halobacterium salinarum (strain ATCC 700922 / JCM 11081 / NRC-1) (Halobacterium halobium).